Here is a 234-residue protein sequence, read N- to C-terminus: Lipoprotein-releasing system ATP-binding protein LolD (234 aa).

Residues 7–233 (LQCINLCKRY…LQHHLTLVGA (227 aa)) form the ABC transporter domain. ATP is bound at residue 43 to 50 (GSSGSGKS).

It belongs to the ABC transporter superfamily. Lipoprotein translocase (TC 3.A.1.125) family. In terms of assembly, the complex is composed of two ATP-binding proteins (LolD) and two transmembrane proteins (LolC and LolE).

Its subcellular location is the cell inner membrane. Part of the ABC transporter complex LolCDE involved in the translocation of mature outer membrane-directed lipoproteins, from the inner membrane to the periplasmic chaperone, LolA. Responsible for the formation of the LolA-lipoprotein complex in an ATP-dependent manner. The chain is Lipoprotein-releasing system ATP-binding protein LolD from Yersinia pestis bv. Antiqua (strain Antiqua).